A 336-amino-acid polypeptide reads, in one-letter code: Calcium uniporter protein 3, mitochondrial (336 aa).

The transit peptide at 1-69 (MAMRKLLSKK…RFMHNSAMIR (69 aa)) directs the protein to the mitochondrion. 2 helical membrane-spanning segments follow: residues 231–251 (LWAG…LTFW) and 257–277 (VMEP…YAFF). The Selectivity filter signature appears at 255–263 (WDVMEPICF). Residue Glu-259 participates in Ca(2+) binding.

Belongs to the MCU (TC 1.A.77) family.

The protein resides in the mitochondrion inner membrane. The catalysed reaction is Ca(2+)(in) = Ca(2+)(out). Its function is as follows. Mitochondrial inner membrane calcium uniporter that mediates calcium uptake into mitochondria. Constitutes a pore-forming and calcium-conducting subunit. Mitochondrial calcium homeostasis plays key roles in cellular physiology and regulates cell bioenergetics, cytoplasmic calcium signals and activation of cell death pathways. The protein is Calcium uniporter protein 3, mitochondrial of Arabidopsis thaliana (Mouse-ear cress).